A 192-amino-acid chain; its full sequence is Protein A16 (192 aa).

Residues 1-22 (MLLANTAAAVLLLIVCIGASVG) form the signal peptide. The region spanning 71-186 (KNKKFTIGTL…CLNPLNIFPY (116 aa)) is the C-type lectin domain. A disulfide bridge links C163 with C177.

In terms of tissue distribution, expressed in the gut of adults.

The sequence is that of Protein A16 (CTL3) from Anopheles gambiae (African malaria mosquito).